Here is a 294-residue protein sequence, read N- to C-terminus: 1D-myo-inositol 2-acetamido-2-deoxy-alpha-D-glucopyranoside deacetylase (294 aa).

Positions 13, 16, and 148 each coordinate Zn(2+).

This sequence belongs to the MshB deacetylase family. Zn(2+) serves as cofactor.

It carries out the reaction 1D-myo-inositol 2-acetamido-2-deoxy-alpha-D-glucopyranoside + H2O = 1D-myo-inositol 2-amino-2-deoxy-alpha-D-glucopyranoside + acetate. Catalyzes the deacetylation of 1D-myo-inositol 2-acetamido-2-deoxy-alpha-D-glucopyranoside (GlcNAc-Ins) in the mycothiol biosynthesis pathway. In Geodermatophilus obscurus (strain ATCC 25078 / DSM 43160 / JCM 3152 / CCUG 61914 / KCC A-0152 / KCTC 9177 / NBRC 13315 / NRRL B-3577 / G-20), this protein is 1D-myo-inositol 2-acetamido-2-deoxy-alpha-D-glucopyranoside deacetylase.